Consider the following 182-residue polypeptide: Dual-action ribosomal maturation protein DarP (182 aa).

Residues 1 to 20 (MNKQPEEWQDPQSLQQQDDE) are disordered.

It belongs to the DarP family.

The protein localises to the cytoplasm. Member of a network of 50S ribosomal subunit biogenesis factors which assembles along the 30S-50S interface, preventing incorrect 23S rRNA structures from forming. Promotes peptidyl transferase center (PTC) maturation. This Sodalis glossinidius (strain morsitans) protein is Dual-action ribosomal maturation protein DarP.